The chain runs to 377 residues: Cytochrome c peroxidase, mitochondrial (377 aa).

The N-terminal 17 residues, 1-17, are a transit peptide targeting the mitochondrion; sequence MSFRAPNLIRSAAGRRA. The active-site Proton acceptor is the histidine 138. Histidine 261 contributes to the heme b binding site. Tryptophan 277 serves as the catalytic Tryptophan radical intermediate.

The protein belongs to the peroxidase family. Cytochrome c peroxidase subfamily. Forms a one-to-one complex with cytochrome c. Requires heme b as cofactor.

Its subcellular location is the mitochondrion matrix. The protein localises to the mitochondrion intermembrane space. It catalyses the reaction 2 Fe(II)-[cytochrome c] + H2O2 + 2 H(+) = 2 Fe(III)-[cytochrome c] + 2 H2O. Its function is as follows. Destroys radicals which are normally produced within the cells and which are toxic to biological systems. In Cryptococcus neoformans var. neoformans serotype D (strain JEC21 / ATCC MYA-565) (Filobasidiella neoformans), this protein is Cytochrome c peroxidase, mitochondrial (CCP1).